A 546-amino-acid polypeptide reads, in one-letter code: Branchpoint-bridging protein (546 aa).

Disordered regions lie at residues 1–141 (MWRP…ASAK) and 178–199 (TGDV…YDAY). The segment covering 50–128 (RQERERDARD…DRGDSNEDGP (79 aa)) has biased composition (basic and acidic residues). One can recognise a KH domain in the interval 251-330 (YIPVKEFPEI…SKVKTCVALI (80 aa)). 2 CCHC-type zinc fingers span residues 368 to 385 (QLCQ…ECPQ) and 393 to 410 (VICR…DCRG).

It belongs to the BBP/SF1 family.

Its subcellular location is the nucleus. Functionally, necessary for the splicing of pre-mRNA. Has a role in the recognition of the branch site (5'-UACUAAC-3'), the pyrimidine tract and the 3'-splice site at the 3'-end of introns. The polypeptide is Branchpoint-bridging protein (BBP) (Cryptococcus neoformans var. neoformans serotype D (strain B-3501A) (Filobasidiella neoformans)).